The primary structure comprises 555 residues: Galectin-3-binding protein (555 aa).

The signal sequence occupies residues 1–18 (MAPLRLFWIWLLVVGTRG). One can recognise an SRCR domain in the interval 24–124 (MRLADGGSAN…HDKDASVICT (101 aa)). 3 cysteine pairs are disulfide-bonded: C49/C113, C62/C123, and C93/C103. An N-linked (GlcNAc...) asparagine glycan is attached at N69. The N-linked (GlcNAc...) asparagine glycan is linked to N125. Residues 153-221 (CDLFITVKVR…LYSRRIDVSL (69 aa)) form the BTB domain. Residues 260–360 (PLELYAYALA…MPPQDLFSLQ (101 aa)) form the BACK domain. Residues N362, N398, and N550 are each glycosylated (N-linked (GlcNAc...) asparagine).

As to quaternary structure, homodimers and homomultimers. The multimers form ring-like structures with a diameter of 30-40 nm. Binds LGALS1 and LGALS3. Binds ITGB1, COL4A1, COL5A1, COL6A1, FN1 and NID. Interacts with the gamma-tubulin ring complex (gamma-TuRC), composed of gamma-tubulin, TUBGCP2, TUBGCP3, TUBGCP4, TUBGCP5 and TUBGCP6. The unglycosylated form interacts with PDE4DIP; this interaction, which is PDE4DIP isoform-specific, may connect a pericentrosomal complex, made of AKAP9, CDK5RAP2, EB1/MAPRE1 and PDE4DIP, to the gamma-tubulin ring complex (gamma-TuRC) to promote microtubule assembly and acetylation.

It is found in the secreted. Its subcellular location is the extracellular space. The protein resides in the extracellular matrix. Its function is as follows. Promotes integrin-mediated cell adhesion. May stimulate host defense against viruses and tumor cells. This Bos taurus (Bovine) protein is Galectin-3-binding protein (LGALS3BP).